The chain runs to 284 residues: L-ribulose-5-phosphate 3-epimerase UlaE (284 aa).

The protein belongs to the L-ribulose-5-phosphate 3-epimerase family.

It catalyses the reaction L-ribulose 5-phosphate = L-xylulose 5-phosphate. The protein operates within cofactor degradation; L-ascorbate degradation; D-xylulose 5-phosphate from L-ascorbate: step 3/4. Its function is as follows. Catalyzes the isomerization of L-xylulose-5-phosphate to L-ribulose-5-phosphate. Is involved in the anaerobic L-ascorbate utilization. This Escherichia coli O157:H7 (strain EC4115 / EHEC) protein is L-ribulose-5-phosphate 3-epimerase UlaE.